Here is a 267-residue protein sequence, read N- to C-terminus: Cilia- and flagella-associated protein 300 (267 aa).

It belongs to the CFAP300 family. As to quaternary structure, interacts with DNAAF2.

Its subcellular location is the cytoplasm. It localises to the cytoskeleton. The protein localises to the cilium axoneme. Cilium- and flagellum-specific protein that plays a role in axonemal structure organization and motility. May play a role in outer and inner dynein arm assembly. The sequence is that of Cilia- and flagella-associated protein 300 from Rattus norvegicus (Rat).